The following is a 111-amino-acid chain: Putative lipid-binding protein AIR1 (111 aa).

The N-terminal stretch at 1-23 is a signal peptide; it reads MAPRTPLALFVSLNLLFFTYTSA. 3 disulfides stabilise this stretch: C28/C58, C38/C57, and C74/C110.

It belongs to the plant LTP family. PEARLI1 subfamily.

The protein localises to the secreted. The protein is Putative lipid-binding protein AIR1 (AIR1) of Arabidopsis thaliana (Mouse-ear cress).